The sequence spans 173 residues: Shikimate kinase 1 (173 aa).

Position 14 to 19 (14 to 19 (GAGKST)) interacts with ATP. S18 is a Mg(2+) binding site. D36, R60, and G82 together coordinate substrate. R120 is an ATP binding site. Residue R140 coordinates substrate. Q157 contacts ATP.

Belongs to the shikimate kinase family. As to quaternary structure, monomer. It depends on Mg(2+) as a cofactor.

It is found in the cytoplasm. It catalyses the reaction shikimate + ATP = 3-phosphoshikimate + ADP + H(+). The protein operates within metabolic intermediate biosynthesis; chorismate biosynthesis; chorismate from D-erythrose 4-phosphate and phosphoenolpyruvate: step 5/7. Catalyzes the specific phosphorylation of the 3-hydroxyl group of shikimic acid using ATP as a cosubstrate. The chain is Shikimate kinase 1 from Erwinia tasmaniensis (strain DSM 17950 / CFBP 7177 / CIP 109463 / NCPPB 4357 / Et1/99).